Reading from the N-terminus, the 412-residue chain is Lipoyl synthase, mitochondrial (412 aa).

[4Fe-4S] cluster-binding residues include cysteine 127, cysteine 132, cysteine 138, cysteine 159, cysteine 163, cysteine 166, and serine 375. The Radical SAM core domain occupies 142–364 (SDDEGTATAT…EKEAMDMGFL (223 aa)).

This sequence belongs to the radical SAM superfamily. Lipoyl synthase family. [4Fe-4S] cluster serves as cofactor.

Its subcellular location is the mitochondrion. The enzyme catalyses [[Fe-S] cluster scaffold protein carrying a second [4Fe-4S](2+) cluster] + N(6)-octanoyl-L-lysyl-[protein] + 2 oxidized [2Fe-2S]-[ferredoxin] + 2 S-adenosyl-L-methionine + 4 H(+) = [[Fe-S] cluster scaffold protein] + N(6)-[(R)-dihydrolipoyl]-L-lysyl-[protein] + 4 Fe(3+) + 2 hydrogen sulfide + 2 5'-deoxyadenosine + 2 L-methionine + 2 reduced [2Fe-2S]-[ferredoxin]. It functions in the pathway protein modification; protein lipoylation via endogenous pathway; protein N(6)-(lipoyl)lysine from octanoyl-[acyl-carrier-protein]: step 2/2. Its function is as follows. Catalyzes the radical-mediated insertion of two sulfur atoms into the C-6 and C-8 positions of the octanoyl moiety bound to the lipoyl domains of lipoate-dependent enzymes, thereby converting the octanoylated domains into lipoylated derivatives. This chain is Lipoyl synthase, mitochondrial, found in Leishmania infantum.